Consider the following 419-residue polypeptide: N-acylneuraminate cytidylyltransferase (419 aa).

It belongs to the CMP-NeuNAc synthase family. In terms of assembly, monomer. May form aggregates. The cofactor is Mg(2+). Requires Mn(2+) as cofactor.

It is found in the cytoplasm. The catalysed reaction is an N-acylneuraminate + CTP = a CMP-N-acyl-beta-neuraminate + diphosphate. Its activity is regulated as follows. Inhibited by the CTP analogs 5-mercuri-CTP and CTP-2',3'-dialdehyde. In terms of biological role, catalyzes the formation of CMP-N-acetylneuraminic acid (CMP-NeuNAc), which is essential for the formation of the capsule. The protein is N-acylneuraminate cytidylyltransferase (neuA) of Escherichia coli O18:K1:H7 (strain RS218 / NMEC).